The following is a 217-amino-acid chain: Probable glutathione S-transferase (217 aa).

Residues 2 to 81 (AEVKLLGLRY…YIDEAFEGPS (80 aa)) form the GST N-terminal domain. Glutathione is bound by residues serine 12, lysine 39, isoleucine 53, and 65 to 66 (ES). The 125-residue stretch at 86 to 210 (DPYDRALARF…ELLIRYRAYI (125 aa)) folds into the GST C-terminal domain.

The protein belongs to the GST superfamily. HSP26 family.

It carries out the reaction RX + glutathione = an S-substituted glutathione + a halide anion + H(+). This chain is Probable glutathione S-transferase (PRP1), found in Solanum tuberosum (Potato).